Consider the following 584-residue polypeptide: Low-affinity iron/zinc ion transport protein fet4 (584 aa).

The segment at 1–28 (MTASITEIDSISEESNVESVSHLQHSPS) is disordered. At 1–160 (MTASITEIDS…FDLITRLAGT (160 aa)) the chain is on the extracellular side. The helical transmembrane segment at 161-181 (SFTFILMLIILIVWAIVGGIY) threads the bilayer. Over 182-277 (RAPDNWQIVM…WFDFICNYVS (96 aa)) the chain is Cytoplasmic. A helical membrane pass occupies residues 278 to 298 (FMVGSIIFLVVYWIGIFIWIG). Residues 299–310 (FGRMLGWSDEWQ) lie on the Extracellular side of the membrane. A helical transmembrane segment spans residues 311-331 (LYINTAVAVELTFTSVFLQNV). Over 332-389 (RHRHMKYIDRCVTSIFRIDSVIEEELRRMMGDKEPNEEITIKMDKINLGERSIDYYAD) the chain is Cytoplasmic. Residues 390-410 (LIGSGVGVVVSTCVFVAWIAI) traverse the membrane as a helical segment. At 411-418 (GNVMHWDS) the chain is on the extracellular side. A helical transmembrane segment spans residues 419–439 (NWWLIIGTYTGLVGFLDGFVL). The Cytoplasmic portion of the chain corresponds to 440–493 (RNVYFRESSKEATEIQTLIDEDYALYQKLDLPLPHEHITNYKSTFGGSLSQWIG). The helical transmembrane segment at 494-514 (WLCALPISVLFSVFVILGLII) threads the bilayer. At 515-526 (AAGSLRFNETAQ) the chain is on the extracellular side. Residue N522 is glycosylated (N-linked (GlcNAc...) asparagine). Residues 527–547 (LFCNTPTMIIEGALLIVLIEA) traverse the membrane as a helical segment. Residues 548 to 584 (HNIANLKRRIQFRQIHLRRLTILKMLAGDNYSTTSTV) lie on the Cytoplasmic side of the membrane.

It belongs to the FET4 family.

The protein localises to the golgi apparatus membrane. It is found in the cell membrane. Its function is as follows. Required for Fe(2+) ion low affinity uptake. Has a role in zinc uptake under conditions of zinc limitation. This Schizosaccharomyces pombe (strain 972 / ATCC 24843) (Fission yeast) protein is Low-affinity iron/zinc ion transport protein fet4 (fet4).